Consider the following 510-residue polypeptide: NKAP family protein (510 aa).

Basic and acidic residues predominate over residues 1–22; sequence MSHRERDRDRDRDSDRDRDRNR. 3 disordered regions span residues 1-128, 149-220, and 239-401; these read MSHR…VEIQ, ERKD…NYNG, and VYER…PISE. A compositionally biased stretch (basic residues) spans 23 to 39; sequence YSRSRSRGSRSRSRSRS. A compositionally biased stretch (basic and acidic residues) spans 40-89; sequence RSRDRNRNRDYNKDRSSNRDSYYNDRDYKKDRSSNRDRDYYDRDRNRDYK. Over residues 96–105 the composition is skewed to gly residues; sequence SSGGGGGGSG. Low complexity-rich tracts occupy residues 112–123 and 184–219; these read SSSYRESNSNNS and NNNN…SNYN. Residues 262–273 show a composition bias toward basic residues; it reads NKKKSKKSRRKS. Residues 274-283 are compositionally biased toward low complexity; it reads SSNSDSSSSD. Residues 292 to 322 are compositionally biased toward basic residues; the sequence is REKRKKSKSRKDKKKRKEKKKHQRKSSKRSS. Basic and acidic residues predominate over residues 342–351; that stretch reads DSDRSDSEGR. Positions 352-367 are enriched in basic residues; it reads SRKKRSKKRSKKRHDH. Over residues 368-383 the composition is skewed to basic and acidic residues; sequence HKESVHDASMWEEKVE.

It belongs to the NKAP family.

In Dictyostelium discoideum (Social amoeba), this protein is NKAP family protein.